We begin with the raw amino-acid sequence, 81 residues long: Photosystem I iron-sulfur center (81 aa).

4Fe-4S ferredoxin-type domains follow at residues 2-31 (AHSV…MIPW) and 39-68 (IASA…VRVY). Residues Cys-11, Cys-14, Cys-17, Cys-21, Cys-48, Cys-51, Cys-54, and Cys-58 each coordinate [4Fe-4S] cluster.

As to quaternary structure, the eukaryotic PSI reaction center is composed of at least 11 subunits. [4Fe-4S] cluster serves as cofactor.

It is found in the plastid. The protein localises to the chloroplast thylakoid membrane. The enzyme catalyses reduced [plastocyanin] + hnu + oxidized [2Fe-2S]-[ferredoxin] = oxidized [plastocyanin] + reduced [2Fe-2S]-[ferredoxin]. Functionally, apoprotein for the two 4Fe-4S centers FA and FB of photosystem I (PSI); essential for photochemical activity. FB is the terminal electron acceptor of PSI, donating electrons to ferredoxin. The C-terminus interacts with PsaA/B/D and helps assemble the protein into the PSI complex. Required for binding of PsaD and PsaE to PSI. PSI is a plastocyanin-ferredoxin oxidoreductase, converting photonic excitation into a charge separation, which transfers an electron from the donor P700 chlorophyll pair to the spectroscopically characterized acceptors A0, A1, FX, FA and FB in turn. This chain is Photosystem I iron-sulfur center, found in Zygnema circumcarinatum (Green alga).